The following is a 719-amino-acid chain: Glutamate--tRNA ligase, cytoplasmic (719 aa).

Serine 93 is an ATP binding site. The interval serine 176 to aspartate 205 is disordered. Positions aspartate 195–valine 204 are enriched in basic and acidic residues. Arginine 217–alanine 219 is a binding site for L-glutamate. The 'HIGH' region motif lies at proline 220 to histidine 230. Histidine 227 contacts ATP. Residues tyrosine 393–cysteine 397 and arginine 411 each bind L-glutamate. Residues glutamate 414 and leucine 448–arginine 452 contribute to the ATP site. The short motif at leucine 448–arginine 452 is the 'KMSKS' region element.

Belongs to the class-I aminoacyl-tRNA synthetase family. Glutamate--tRNA ligase type 2 subfamily. Interacts with GLN2, COL4 and RPP13L4/ZAR1.

The protein resides in the cytoplasm. It is found in the cytosol. It carries out the reaction tRNA(Glu) + L-glutamate + ATP = L-glutamyl-tRNA(Glu) + AMP + diphosphate. In terms of biological role, catalyzes the attachment of glutamate to tRNA(Glu) in a two-step reaction: glutamate is first activated by ATP to form Glu-AMP and then transferred to the acceptor end of tRNA(Glu). This Arabidopsis thaliana (Mouse-ear cress) protein is Glutamate--tRNA ligase, cytoplasmic.